The sequence spans 179 residues: Cytoglobin-2 (179 aa).

Residues 18–167 form the Globin domain; it reads PLSDAEMEII…VYWHVTGAYT (150 aa). Residues H81 and H113 each coordinate heme b.

The protein belongs to the globin family. In terms of assembly, monomeric.

The protein resides in the cytoplasm. Its subcellular location is the nucleus. The catalysed reaction is Fe(II)-heme b-[protein] + nitric oxide + O2 = Fe(III)-heme b-[protein] + nitrate. It carries out the reaction Fe(III)-heme b-[protein] + nitric oxide + H2O = Fe(II)-heme b-[protein] + nitrite + 2 H(+). It catalyses the reaction 2 superoxide + 2 H(+) = H2O2 + O2. The enzyme catalyses H2O2 + AH2 = A + 2 H2O. Probable multifunctional globin with a hexacoordinated heme iron required for the catalysis of various reactions depending on redox condition of the cell as well as oxygen availability. Has a nitric oxide dioxygenase (NOD) activity and is most probably involved in cell-mediated and oxygen-dependent nitric oxide consumption. Under normoxic conditions functions as a nitric oxide dioxygenase (NOD) but under hypoxic conditions the globin may switch its function to that of a nitrite (NO2) reductase (NiR), generating nitric oxide. Could also have peroxidase and superoxide dismutase activities, detoxifying reactive oxygen species and protecting cells against oxidative stress. Also binds dioxygen with low affinity and could function as an oxygen sensor but has probably no function as a respiratory oxygen carrier. The polypeptide is Cytoglobin-2 (Oryzias latipes (Japanese rice fish)).